The chain runs to 924 residues: DNA repair and recombination protein RDH54 (924 aa).

The segment covering 1–10 (MQIPKYENKP) has biased composition (basic and acidic residues). Disordered stretches follow at residues 1 to 21 (MQIP…GSNK) and 155 to 183 (EALS…NDGG). Low complexity predominate over residues 168 to 178 (TTSTTETVPST). Residues 299–487 (LENDSDISGC…FTIIDFINPG (189 aa)) enclose the Helicase ATP-binding domain. An ATP-binding site is contributed by 346 to 353 (IPLTGLCK). Positions 472–475 (NDLN) match the DEGH box motif. A Glycyl lysine isopeptide (Lys-Gly) (interchain with G-Cter in ubiquitin) cross-link involves residue K615. The Helicase C-terminal domain occupies 631–790 (KLRVLMTLLE…DSEMRNKESS (160 aa)).

This sequence belongs to the SNF2/RAD54 helicase family. In terms of assembly, interacts with RAD51 and DMC1.

The protein resides in the nucleus. The catalysed reaction is ATP + H2O = ADP + phosphate + H(+). In terms of biological role, involved in the recombinational repair of double-strand breaks (DSB) in DNA during mitosis and meiosis. Has DNA dependent ATPase activity. Promotes D-loop (displacement loop) formation with RAD51 recombinase. Modifies the topology of double-stranded DNA during the D-loop reaction to facilitate the invasion of the homologous duplex molecule by the initiating single-stranded DNA substrate. Required for adaptation from G2/M checkpoint arrest induced by a double strand break, by participating in monitoring the extent of single-stranded DNA produced by resection of DNA ends. This role is distinct from its roles in recombination. Promotes colocalization of RAD51 and DMC1 during meiotic recombination. Involved in crossover interference. The protein is DNA repair and recombination protein RDH54 (RDH54) of Saccharomyces cerevisiae (strain RM11-1a) (Baker's yeast).